Reading from the N-terminus, the 90-residue chain is uncharacterized protein (90 aa).

A helical transmembrane segment spans residues 32 to 52; it reads IIINLIPLVLLFAFFCPCIYF.

The protein localises to the membrane. This is an uncharacterized protein from Schizosaccharomyces pombe (strain 972 / ATCC 24843) (Fission yeast).